The sequence spans 319 residues: Vomeronasal type-1 receptor 96 (319 aa).

Over 1–19 the chain is Extracellular; sequence MNKVNILPSDTNIKITLFS. Residues 20–40 form a helical membrane-spanning segment; that stretch reads EVSVGISANSVLFFAHLCMFF. Over 41–49 the chain is Cytoplasmic; sequence EENRSKPID. Residues 50-70 form a helical membrane-spanning segment; it reads LCIAFLSLTQLMLLVTMGLIA. Topologically, residues 71-93 are extracellular; it reads ADMFMSQGIWDSTTCRSIIYFHR. Cys-85 and Cys-172 form a disulfide bridge. The helical transmembrane segment at 94–114 threads the bilayer; it reads LLRGFNLCAACLLHILWTFTL. Over 115–134 the chain is Cytoplasmic; sequence SPRSSCLTKFKHKSPHHISC. The chain crosses the membrane as a helical span at residues 135-155; it reads AFFSLCVLYMLFSSHLFVLII. At 156 to 193 the chain is on the extracellular side; it reads ATSNLTSDHFMYVTQSCSILPMSYSRTTMFSLVMVTRE. N-linked (GlcNAc...) asparagine glycosylation is present at Asn-159. A helical membrane pass occupies residues 194–214; it reads AFLISLMALFSGYMVTLLWRH. The Cytoplasmic segment spans residues 215-238; the sequence is KKQVQHLHSTSLSSKSSPQQRATR. The chain crosses the membrane as a helical span at residues 239-259; that stretch reads TILLLMSFFVVLYILDIVIFQ. The Extracellular segment spans residues 260–269; sequence SRTKFKDGSM. Residues 270–290 traverse the membrane as a helical segment; it reads FYSLHIIVSHSYATISPFVFI. Over 291–319 the chain is Cytoplasmic; the sequence is FSDKRIIKFLGSMSGRIINICLFSDGYGP.

Belongs to the G-protein coupled receptor 1 family.

Its subcellular location is the cell membrane. Functionally, putative pheromone receptor implicated in the regulation of social as well as reproductive behavior. The chain is Vomeronasal type-1 receptor 96 (Vom1r96) from Rattus norvegicus (Rat).